The primary structure comprises 278 residues: MYFEITGQNSPAAKTVVLSAGLGGSGRFWQPQLSALGQHFRVITYDQYGTGRSAGVIPSGYTLADMADELADLLASQHIERYHFVGHALGGMIGLQLALSHPQCVERLVAINSWPVLDSQTRRCFHVRQDLLLNSGVAAYVRAQPLFLYPADWLSRNTLLLEQEEVQQIAHFQGMENLLRRLNALMNADFRSVLPHITTPTLALCATDDLLVPYPCSQALAELLPDGEWAQMSYGGHAMSVTNSEQFNGILLSYLLMDTGIAKCELALNQSNTSAIHL.

The protein belongs to the AB hydrolase superfamily. Hydrolase RutD family.

It catalyses the reaction carbamate + 2 H(+) = NH4(+) + CO2. Its function is as follows. Involved in pyrimidine catabolism. May facilitate the hydrolysis of carbamate, a reaction that can also occur spontaneously. In Yersinia enterocolitica serotype O:8 / biotype 1B (strain NCTC 13174 / 8081), this protein is Putative carbamate hydrolase RutD.